An 88-amino-acid polypeptide reads, in one-letter code: Small ribosomal subunit protein bS20 (88 aa).

This sequence belongs to the bacterial ribosomal protein bS20 family.

In terms of biological role, binds directly to 16S ribosomal RNA. The chain is Small ribosomal subunit protein bS20 from Methylocella silvestris (strain DSM 15510 / CIP 108128 / LMG 27833 / NCIMB 13906 / BL2).